The chain runs to 78 residues: U-scoloptoxin(04)-Er1d (78 aa).

The N-terminal stretch at 1-24 is a signal peptide; the sequence is MTRHLIFAAMLLVCLFVCWNAVGA. Residues 25–28 constitute a propeptide that is removed on maturation; that stretch reads RDAR.

Belongs to the scoloptoxin-04 family. Post-translationally, contains 2 disulfide bonds. In terms of tissue distribution, expressed by the venom gland.

The protein resides in the secreted. This is U-scoloptoxin(04)-Er1d from Ethmostigmus rubripes (Giant centipede).